The sequence spans 211 residues: Endo-1,4-beta-xylanase 5 (211 aa).

Residues 1–16 form the signal peptide; the sequence is MKVTAAFASLLLTAFA. The GH11 domain occupies 19–210; the sequence is APEPVLVSRS…GVGSASVTIS (192 aa). Glu106 acts as the Nucleophile in catalysis. Glu197 acts as the Proton donor in catalysis.

It belongs to the glycosyl hydrolase 11 (cellulase G) family.

It localises to the secreted. It carries out the reaction Endohydrolysis of (1-&gt;4)-beta-D-xylosidic linkages in xylans.. It participates in glycan degradation; xylan degradation. In terms of biological role, endo-1,4-beta-xylanase involved in the hydrolysis of xylan, a major structural heterogeneous polysaccharide found in plant biomass representing the second most abundant polysaccharide in the biosphere, after cellulose. This chain is Endo-1,4-beta-xylanase 5 (XYN5), found in Aspergillus niger.